The chain runs to 434 residues: Serine--tRNA ligase (434 aa).

237 to 239 (TAE) lines the L-serine pocket. Position 268–270 (268–270 (RAE)) interacts with ATP. E291 is an L-serine binding site. 358–361 (EISS) is an ATP binding site. S393 is a binding site for L-serine.

This sequence belongs to the class-II aminoacyl-tRNA synthetase family. Type-1 seryl-tRNA synthetase subfamily. Homodimer. The tRNA molecule binds across the dimer.

It localises to the cytoplasm. It catalyses the reaction tRNA(Ser) + L-serine + ATP = L-seryl-tRNA(Ser) + AMP + diphosphate + H(+). The enzyme catalyses tRNA(Sec) + L-serine + ATP = L-seryl-tRNA(Sec) + AMP + diphosphate + H(+). The protein operates within aminoacyl-tRNA biosynthesis; selenocysteinyl-tRNA(Sec) biosynthesis; L-seryl-tRNA(Sec) from L-serine and tRNA(Sec): step 1/1. In terms of biological role, catalyzes the attachment of serine to tRNA(Ser). Is also able to aminoacylate tRNA(Sec) with serine, to form the misacylated tRNA L-seryl-tRNA(Sec), which will be further converted into selenocysteinyl-tRNA(Sec). In Rhodopseudomonas palustris (strain ATCC BAA-98 / CGA009), this protein is Serine--tRNA ligase.